Consider the following 471-residue polypeptide: Glutamate--tRNA ligase 2 (471 aa).

Positions 15–25 (PSPTGYLHIGG) match the 'HIGH' region motif. Positions 243–247 (KLSKR) match the 'KMSKS' region motif. ATP is bound at residue Lys-246.

Belongs to the class-I aminoacyl-tRNA synthetase family. Glutamate--tRNA ligase type 1 subfamily. As to quaternary structure, monomer.

Its subcellular location is the cytoplasm. The catalysed reaction is tRNA(Glu) + L-glutamate + ATP = L-glutamyl-tRNA(Glu) + AMP + diphosphate. Its function is as follows. Catalyzes the attachment of glutamate to tRNA(Glu) in a two-step reaction: glutamate is first activated by ATP to form Glu-AMP and then transferred to the acceptor end of tRNA(Glu). The polypeptide is Glutamate--tRNA ligase 2 (Cereibacter sphaeroides (strain ATCC 17025 / ATH 2.4.3) (Rhodobacter sphaeroides)).